We begin with the raw amino-acid sequence, 292 residues long: 33 kDa chaperonin (292 aa).

2 disulfide bridges follow: C230–C232 and C263–C266.

It belongs to the HSP33 family. Under oxidizing conditions two disulfide bonds are formed involving the reactive cysteines. Under reducing conditions zinc is bound to the reactive cysteines and the protein is inactive.

It localises to the cytoplasm. Functionally, redox regulated molecular chaperone. Protects both thermally unfolding and oxidatively damaged proteins from irreversible aggregation. Plays an important role in the bacterial defense system toward oxidative stress. In Enterobacter sp. (strain 638), this protein is 33 kDa chaperonin.